We begin with the raw amino-acid sequence, 486 residues long: Ribulose bisphosphate carboxylase large chain (486 aa).

Residues Asn125 and Thr175 each contribute to the substrate site. Lys177 acts as the Proton acceptor in catalysis. Lys179 is a substrate binding site. 3 residues coordinate Mg(2+): Lys203, Asp205, and Glu206. Residue Lys203 is modified to N6-carboxylysine. His295 acts as the Proton acceptor in catalysis. Substrate contacts are provided by Arg296, His328, and Ser380.

It belongs to the RuBisCO large chain family. Type I subfamily. Heterohexadecamer of 8 large chains and 8 small chains. It depends on Mg(2+) as a cofactor.

It carries out the reaction 2 (2R)-3-phosphoglycerate + 2 H(+) = D-ribulose 1,5-bisphosphate + CO2 + H2O. The catalysed reaction is D-ribulose 1,5-bisphosphate + O2 = 2-phosphoglycolate + (2R)-3-phosphoglycerate + 2 H(+). RuBisCO catalyzes two reactions: the carboxylation of D-ribulose 1,5-bisphosphate, the primary event in carbon dioxide fixation, as well as the oxidative fragmentation of the pentose substrate. Both reactions occur simultaneously and in competition at the same active site. The chain is Ribulose bisphosphate carboxylase large chain from Bradyrhizobium diazoefficiens (strain JCM 10833 / BCRC 13528 / IAM 13628 / NBRC 14792 / USDA 110).